The following is a 495-amino-acid chain: ATP synthase subunit beta, chloroplastic (495 aa).

172–179 (GGAGVGKT) is a binding site for ATP.

Belongs to the ATPase alpha/beta chains family. F-type ATPases have 2 components, CF(1) - the catalytic core - and CF(0) - the membrane proton channel. CF(1) has five subunits: alpha(3), beta(3), gamma(1), delta(1), epsilon(1). CF(0) has four main subunits: a(1), b(1), b'(1) and c(9-12).

It is found in the plastid. It localises to the chloroplast thylakoid membrane. The enzyme catalyses ATP + H2O + 4 H(+)(in) = ADP + phosphate + 5 H(+)(out). Functionally, produces ATP from ADP in the presence of a proton gradient across the membrane. The catalytic sites are hosted primarily by the beta subunits. The chain is ATP synthase subunit beta, chloroplastic from Bowiea volubilis (Climbing onion).